The following is a 290-amino-acid chain: MKDSAILNQLKVVLPPHIMEIIYFRYNQIDTYLKPYNLPIKTDVLLLALFTLIFIIIISKLFGSSGNKTRSVGGRTSNDKKVKRGVNIAILGLSNAGKTALLLNLTNVDKKISTHTSITTNNGVYITENKKKLPIIDVPGNGKAKASLPKILSNSACIIYVIDGTTFIDNSTQEAQYLYDILTNESVYQKKIPVLVFNNKMDLDSTIDTEQVKNILERELDDLRRTRGATPIVLGQEEDKKDIYLGIEGTPFQFDHLPNDVQFSNGSASPSNGELKEIDDIKNFIQTTTL.

The helical transmembrane segment at 44 to 64 (VLLLALFTLIFIIIISKLFGS) threads the bilayer. GTP contacts are provided by residues 92–100 (GLSNAGKTA), 114–117 (THTS), Gly140, and Ala268.

This sequence belongs to the SRP receptor beta subunit family. Heterodimer of an alpha and a beta chain.

The protein localises to the endoplasmic reticulum membrane. Its function is as follows. Component of the signal recognition particle (SRP) complex receptor (SR). Ensures, in conjunction with the SRP complex, the correct targeting of the nascent secretory proteins to the endoplasmic reticulum membrane system. May mediate the membrane association of SR. In Dictyostelium discoideum (Social amoeba), this protein is Signal recognition particle receptor subunit beta (srprb).